We begin with the raw amino-acid sequence, 315 residues long: Methionyl-tRNA formyltransferase (315 aa).

Position 113–116 (113–116 (SLLP)) interacts with (6S)-5,6,7,8-tetrahydrofolate.

The protein belongs to the Fmt family.

The catalysed reaction is L-methionyl-tRNA(fMet) + (6R)-10-formyltetrahydrofolate = N-formyl-L-methionyl-tRNA(fMet) + (6S)-5,6,7,8-tetrahydrofolate + H(+). Its function is as follows. Attaches a formyl group to the free amino group of methionyl-tRNA(fMet). The formyl group appears to play a dual role in the initiator identity of N-formylmethionyl-tRNA by promoting its recognition by IF2 and preventing the misappropriation of this tRNA by the elongation apparatus. This chain is Methionyl-tRNA formyltransferase, found in Escherichia coli O127:H6 (strain E2348/69 / EPEC).